Here is a 37-residue protein sequence, read N- to C-terminus: Large ribosomal subunit protein bL36 (37 aa).

This sequence belongs to the bacterial ribosomal protein bL36 family.

This is Large ribosomal subunit protein bL36 from Synechococcus sp. (strain RCC307).